Here is a 196-residue protein sequence, read N- to C-terminus: Recombination protein RecR (196 aa).

The C4-type zinc-finger motif lies at 56–71 (CPVCGGLDSQQPCMIC). The region spanning 78–172 (PLICVVETVA…SVTRLAQGVP (95 aa)) is the Toprim domain.

It belongs to the RecR family.

May play a role in DNA repair. It seems to be involved in an RecBC-independent recombinational process of DNA repair. It may act with RecF and RecO. This chain is Recombination protein RecR, found in Acidiphilium cryptum (strain JF-5).